A 209-amino-acid polypeptide reads, in one-letter code: Protein ASG7 (209 aa).

Over 1 to 49 the chain is Lumenal; sequence MTTLASSIEHKTKHLAAPFENDENTWMKKYCCQCKSCKMSVPVQPWLPR. A helical transmembrane segment spans residues 50-70; it reads FFVFGILCPVFWLVNLLAWWF. The Cytoplasmic segment spans residues 71 to 184; that stretch reads LQYWQPHELE…LLRKTFRNWN (114 aa). Ser-121, Ser-123, and Ser-125 each carry phosphoserine. Phosphothreonine is present on Thr-153. The chain crosses the membrane as a helical span at residues 185 to 205; that stretch reads LRSLLGLLIDSILIIFVVLLC. Over 206-209 the chain is Lumenal; that stretch reads KKSR.

It localises to the endomembrane system. Functionally, required for receptor inhibition of inappropriately expressed a-factor receptor (STE3) in MAT a cells. Inhibits signaling by relocalizing the G protein beta-gamma (STE4-STE18) subunit to intracellular membranes. May also be a mechanism for the down-regulation of the mating pheromone response after the zygotic fusion event, promoting the transition of the new diploid cell to vegetative growth. This Saccharomyces cerevisiae (strain YJM789) (Baker's yeast) protein is Protein ASG7 (ASG7).